Here is a 107-residue protein sequence, read N- to C-terminus: Thioredoxin (107 aa).

The region spanning 2–107 (PSPIQVTDFS…TLTNALKKYL (106 aa)) is the Thioredoxin domain. Catalysis depends on nucleophile residues C32 and C35. An intrachain disulfide couples C32 to C35.

It belongs to the thioredoxin family.

Its subcellular location is the plastid. The protein localises to the chloroplast. Its function is as follows. Participates in various redox reactions through the reversible oxidation of its active center dithiol to a disulfide and catalyzes dithiol-disulfide exchange reactions. This is Thioredoxin (trxA) from Cyanidium caldarium (Red alga).